Here is a 924-residue protein sequence, read N- to C-terminus: Lipoxygenase 7, chloroplastic (924 aa).

Residues Met1–Val61 constitute a chloroplast transit peptide. Positions Ala88 to Arg218 constitute a PLAT domain. The Lipoxygenase domain occupies Thr225–Ile924. Residues Thr231–Val315 are disordered. 2 stretches are compositionally biased toward basic and acidic residues: residues Arg239–Asp262 and Ser302–Val315. Fe cation is bound by residues His581, His586, His773, Asn777, and Ile924.

This sequence belongs to the lipoxygenase family. It depends on Fe cation as a cofactor.

Its subcellular location is the plastid. It is found in the chloroplast. The catalysed reaction is (9Z,12Z)-octadecadienoate + O2 = (13S)-hydroperoxy-(9Z,11E)-octadecadienoate. It carries out the reaction (9Z,12Z,15Z)-octadecatrienoate + O2 = (13S)-hydroperoxy-(9Z,11E,15Z)-octadecatrienoate. It participates in lipid metabolism; oxylipin biosynthesis. Plant lipoxygenase may be involved in a number of diverse aspects of plant physiology including growth and development, pest resistance, and senescence or responses to wounding. This lipoxygenase introduces molecular oxygen exclusively into the C-13 position of linoleic and linolenic acids. This is Lipoxygenase 7, chloroplastic (CM-LOX1) from Oryza sativa subsp. japonica (Rice).